A 139-amino-acid polypeptide reads, in one-letter code: D-ribose pyranase (139 aa).

H20 serves as the catalytic Proton donor. Substrate contacts are provided by residues D28, H106, and 128-130 (YAN).

It belongs to the RbsD / FucU family. RbsD subfamily. Homodecamer.

Its subcellular location is the cytoplasm. It carries out the reaction beta-D-ribopyranose = beta-D-ribofuranose. It functions in the pathway carbohydrate metabolism; D-ribose degradation; D-ribose 5-phosphate from beta-D-ribopyranose: step 1/2. Its function is as follows. Catalyzes the interconversion of beta-pyran and beta-furan forms of D-ribose. The protein is D-ribose pyranase of Citrobacter koseri (strain ATCC BAA-895 / CDC 4225-83 / SGSC4696).